Here is a 20-residue protein sequence, read N- to C-terminus: ATSAAQGAALDESVRKVLKP.

Residues 1–20 (ATSAAQGAALDESVRKVLKP) are disordered.

In Naegleria fowleri (Brain eating amoeba), this protein is Unknown protein NF009 from 2D-PAGE.